The primary structure comprises 86 residues: MAKKSLNETSPVARFEQSLEELEQLVQKMEVGDLSLEQSLTAYERGIGLYRDCQQALEQAELRVRLLTDPARPELAEAFEPPSLDG.

The protein belongs to the XseB family. As to quaternary structure, heterooligomer composed of large and small subunits.

Its subcellular location is the cytoplasm. It carries out the reaction Exonucleolytic cleavage in either 5'- to 3'- or 3'- to 5'-direction to yield nucleoside 5'-phosphates.. In terms of biological role, bidirectionally degrades single-stranded DNA into large acid-insoluble oligonucleotides, which are then degraded further into small acid-soluble oligonucleotides. The sequence is that of Exodeoxyribonuclease 7 small subunit from Xanthomonas axonopodis pv. citri (strain 306).